A 116-amino-acid chain; its full sequence is Ig heavy chain V region 1B43 (116 aa).

An N-terminal signal peptide occupies residues 1 to 18 (MRVLILLCLFTAFPGILS). Residues 19–48 (DVQLQESGPDLVKPSQSLSLTCTVTGYSIT) are framework-1. Cysteine 40 and cysteine 114 are joined by a disulfide. A complementarity-determining-1 region spans residues 49–53 (SGYSW). Residues 54–67 (HWIRQFPGNKLEWM) form a framework-2 region. The segment at 68–84 (GYIHYSGNTSYNPSLKS) is complementarity-determining-2. The framework-3 stretch occupies residues 85-116 (RISITRDTSKNQFFLQLNSVTTEDTATYYCAR).

The chain is Ig heavy chain V region 1B43 from Mus musculus (Mouse).